A 363-amino-acid chain; its full sequence is NAD(P)H-quinone oxidoreductase subunit 1, chloroplastic (363 aa).

8 helical membrane passes run 30-50, 98-118, 127-147, 165-185, 203-223, 248-268, 300-320, and 336-356; these read LFPIFTLVLGITIGVLVIVWL, FSIGPSIAVISIFLSYSVIPF, LSIGVFFWIAISSIAPVGLLM, AAQSISYEIPLALCVLSISLL, FWGWNLWRQPIGFIVFLISSL, YSGIKFGLFYIASYLNLLVSS, VFGTLIGIFITLAKTYLFLFI, and LLNLGWKFLLPISLGNLLLTT.

It belongs to the complex I subunit 1 family. NDH is composed of at least 16 different subunits, 5 of which are encoded in the nucleus.

Its subcellular location is the plastid. The protein resides in the chloroplast thylakoid membrane. It catalyses the reaction a plastoquinone + NADH + (n+1) H(+)(in) = a plastoquinol + NAD(+) + n H(+)(out). It carries out the reaction a plastoquinone + NADPH + (n+1) H(+)(in) = a plastoquinol + NADP(+) + n H(+)(out). Its function is as follows. NDH shuttles electrons from NAD(P)H:plastoquinone, via FMN and iron-sulfur (Fe-S) centers, to quinones in the photosynthetic chain and possibly in a chloroplast respiratory chain. The immediate electron acceptor for the enzyme in this species is believed to be plastoquinone. Couples the redox reaction to proton translocation, and thus conserves the redox energy in a proton gradient. This is NAD(P)H-quinone oxidoreductase subunit 1, chloroplastic from Nicotiana tomentosiformis (Tobacco).